Reading from the N-terminus, the 305-residue chain is Probable 5-dehydro-4-deoxyglucarate dehydratase (305 aa).

The protein belongs to the DapA family.

The catalysed reaction is 5-dehydro-4-deoxy-D-glucarate + H(+) = 2,5-dioxopentanoate + CO2 + H2O. It participates in carbohydrate acid metabolism; D-glucarate degradation; 2,5-dioxopentanoate from D-glucarate: step 2/2. The chain is Probable 5-dehydro-4-deoxyglucarate dehydratase from Xanthomonas campestris pv. campestris (strain 8004).